The following is a 976-amino-acid chain: Serine/threonine-protein kinase CLA4 (976 aa).

Residues 1-46 form a disordered region; the sequence is MTSIYTSDLKNHRRAPPPPNGAAGSGSGSSSGSGSGSGSGSGSGSL. Gly residues predominate over residues 23 to 43; the sequence is AGSGSGSSSGSGSGSGSGSGS. The PH domain maps to 73–184; sequence SKRQSGWVHV…WLDAFTTKCP (112 aa). The tract at residues 207 to 231 is disordered; sequence LTNGSLNGNSSSSPTSGLSSSSVLT. In terms of domain architecture, CRIB spans 237–250; it reads VSGPINFTHKVHVG. 2 disordered regions span residues 298 to 522 and 559 to 658; these read GGNS…KIHP and SKKS…QLKK. Composition is skewed to low complexity over residues 313 to 332 and 371 to 411; these read NSKT…AKNN and LNGS…PLNN. A compositionally biased stretch (polar residues) spans 430-440; the sequence is SGTSSDTYSNK. Positions 441 to 455 are enriched in basic and acidic residues; sequence NHQDRSGYEQQRQQR. A compositionally biased stretch (low complexity) spans 456–487; sequence TDSSQQQQQQQKQHQYQQKSQQQQQQPLSSHQ. Over residues 496-505 the composition is skewed to pro residues; it reads QVPPTLPSSG. The segment covering 559–583 has biased composition (low complexity); the sequence is SKKSQQQLASKQPSPPSSQQQQQKP. Over residues 622 to 635 the composition is skewed to polar residues; sequence NETSGVSKTPSPTD. Residues 685-940 enclose the Protein kinase domain; that stretch reads FRIVEKAGQG…TDELLEHSFI (256 aa). Residues 691–699 and K715 contribute to the ATP site; that span reads AGQGASGNV. The Proton acceptor role is filled by D808.

The protein belongs to the protein kinase superfamily. STE Ser/Thr protein kinase family. STE20 subfamily. As to quaternary structure, interacts (via the CRIB domain) with CDC42.

It carries out the reaction L-seryl-[protein] + ATP = O-phospho-L-seryl-[protein] + ADP + H(+). It catalyses the reaction L-threonyl-[protein] + ATP = O-phospho-L-threonyl-[protein] + ADP + H(+). Its function is as follows. Ser/Thr kinase required for wild-type filamentous growth, chlamydospore formation, and virulence in mouse systemic infection. This is Serine/threonine-protein kinase CLA4 (CLA4) from Candida albicans (strain SC5314 / ATCC MYA-2876) (Yeast).